Here is a 245-residue protein sequence, read N- to C-terminus: Carbohydrate deacetylase (245 aa).

Mg(2+) contacts are provided by histidine 59 and histidine 121.

Belongs to the YdjC deacetylase family. As to quaternary structure, homodimer. The cofactor is Mg(2+).

Its function is as follows. Probably catalyzes the deacetylation of acetylated carbohydrates an important step in the degradation of oligosaccharides. This Clostridium beijerinckii (strain ATCC 51743 / NCIMB 8052) (Clostridium acetobutylicum) protein is Carbohydrate deacetylase.